The primary structure comprises 315 residues: Mannose-6-phosphate isomerase ManA (315 aa).

Residues His97, Glu115, and His172 each contribute to the Zn(2+) site. Residue Arg192 is part of the active site.

The protein belongs to the mannose-6-phosphate isomerase type 1 family. Zn(2+) serves as cofactor.

The catalysed reaction is D-mannose 6-phosphate = D-fructose 6-phosphate. The protein is Mannose-6-phosphate isomerase ManA (manA) of Bacillus subtilis (strain 168).